The chain runs to 800 residues: Phenylalanine--tRNA ligase beta subunit (800 aa).

The 109-residue stretch at 39-147 (FDAIADIVVG…QDSVPGVRLV (109 aa)) folds into the tRNA-binding domain. Positions 401–477 (WQAAQLRFRP…RVYGMDNIPP (77 aa)) constitute a B5 domain. 4 residues coordinate Mg(2+): Asp-455, Asp-461, Glu-464, and Glu-465. One can recognise an FDX-ACB domain in the interval 706 to 800 (PVFPPVKRDI…SLTEALGVRI (95 aa)).

This sequence belongs to the phenylalanyl-tRNA synthetase beta subunit family. Type 1 subfamily. Tetramer of two alpha and two beta subunits. It depends on Mg(2+) as a cofactor.

Its subcellular location is the cytoplasm. It carries out the reaction tRNA(Phe) + L-phenylalanine + ATP = L-phenylalanyl-tRNA(Phe) + AMP + diphosphate + H(+). The protein is Phenylalanine--tRNA ligase beta subunit of Oleidesulfovibrio alaskensis (strain ATCC BAA-1058 / DSM 17464 / G20) (Desulfovibrio alaskensis).